We begin with the raw amino-acid sequence, 215 residues long: Small ribosomal subunit protein uS7 (215 aa).

It belongs to the universal ribosomal protein uS7 family. In terms of assembly, part of the 30S ribosomal subunit.

Functionally, one of the primary rRNA binding proteins, it binds directly to 16S rRNA where it nucleates assembly of the head domain of the 30S subunit. Is located at the subunit interface close to the decoding center. In Pyrococcus furiosus (strain ATCC 43587 / DSM 3638 / JCM 8422 / Vc1), this protein is Small ribosomal subunit protein uS7.